The chain runs to 276 residues: Formamidopyrimidine-DNA glycosylase (276 aa).

The active-site Schiff-base intermediate with DNA is Pro-2. Glu-3 acts as the Proton donor in catalysis. The Proton donor; for beta-elimination activity role is filled by Lys-60. DNA-binding residues include His-93 and Arg-112. An FPG-type zinc finger spans residues 240–274; that stretch reads NVYGKKGEPCVTCGTILEKTVVGGRGTHYCPICQP. Arg-264 (proton donor; for delta-elimination activity) is an active-site residue.

This sequence belongs to the FPG family. Monomer. The cofactor is Zn(2+).

It catalyses the reaction Hydrolysis of DNA containing ring-opened 7-methylguanine residues, releasing 2,6-diamino-4-hydroxy-5-(N-methyl)formamidopyrimidine.. It carries out the reaction 2'-deoxyribonucleotide-(2'-deoxyribose 5'-phosphate)-2'-deoxyribonucleotide-DNA = a 3'-end 2'-deoxyribonucleotide-(2,3-dehydro-2,3-deoxyribose 5'-phosphate)-DNA + a 5'-end 5'-phospho-2'-deoxyribonucleoside-DNA + H(+). Its function is as follows. Involved in base excision repair of DNA damaged by oxidation or by mutagenic agents. Acts as a DNA glycosylase that recognizes and removes damaged bases. Has a preference for oxidized purines, such as 7,8-dihydro-8-oxoguanine (8-oxoG). Has AP (apurinic/apyrimidinic) lyase activity and introduces nicks in the DNA strand. Cleaves the DNA backbone by beta-delta elimination to generate a single-strand break at the site of the removed base with both 3'- and 5'-phosphates. This chain is Formamidopyrimidine-DNA glycosylase, found in Bacillus cereus (strain ATCC 10987 / NRS 248).